A 236-amino-acid chain; its full sequence is HTH-type transcriptional regulator SACE_5812 (236 aa).

Positions 30–90 (LLTQDKIVSA…LALDAVFGEV (61 aa)) constitute an HTH tetR-type domain. The H-T-H motif DNA-binding region spans 53-72 (SMRKLADRLQAHATSLYWHV).

Its function is as follows. Transcriptional regulator that inhibits erythromycin production. Directly represses the expression of SACE_5813, eryAI (encoding polyketide synthase I) and ermE (encoding rRNA methyltransferase), suggesting its direct regulation of the erythromycin biosynthesis gene cluster. May play an important role in regulating secondary metabolism in actinomycetes. This chain is HTH-type transcriptional regulator SACE_5812, found in Saccharopolyspora erythraea (strain ATCC 11635 / DSM 40517 / JCM 4748 / NBRC 13426 / NCIMB 8594 / NRRL 2338).